The primary structure comprises 799 residues: Phenylalanine--tRNA ligase beta subunit (799 aa).

The 108-residue stretch at 40–147 folds into the tRNA-binding domain; it reads KSHLSSVITV…KDTTLGISVR (108 aa). The B5 domain maps to 402 to 479; it reads SKTVTIETNL…RTIGYASIRT (78 aa). Positions 457, 463, 466, and 467 each coordinate Mg(2+). Residues 707–799 form the FDX-ACB domain; it reads SHFPQGQLDL…TAKSNGYSLR (93 aa).

This sequence belongs to the phenylalanyl-tRNA synthetase beta subunit family. Type 1 subfamily. In terms of assembly, tetramer of two alpha and two beta subunits. The cofactor is Mg(2+).

Its subcellular location is the cytoplasm. The catalysed reaction is tRNA(Phe) + L-phenylalanine + ATP = L-phenylalanyl-tRNA(Phe) + AMP + diphosphate + H(+). In Leptospira biflexa serovar Patoc (strain Patoc 1 / Ames), this protein is Phenylalanine--tRNA ligase beta subunit.